The primary structure comprises 344 residues: D-amino-acid oxidase (344 aa).

FAD contacts are provided by A11, S14, S49, G53, N55, and I167. Residues Y229 and R290 each coordinate (R)-lactate. The anthranilate site is built by Y229 and R290. FAD-binding residues include R290, S321, G324, Y325, and Q326.

Belongs to the DAMOX/DASOX family. It depends on FAD as a cofactor.

The protein localises to the peroxisome. The catalysed reaction is a D-alpha-amino acid + O2 + H2O = a 2-oxocarboxylate + H2O2 + NH4(+). It catalyses the reaction D-alanine + O2 + H2O = pyruvate + H2O2 + NH4(+). Catalyzes the oxidative deamination of D-amino acids with broad substrate specificity. Enables the organism to utilize D-amino acids as a source of nutrients. Enables the organism to utilize D-alanine as a source of nitrogen. This is D-amino-acid oxidase from Komagataella phaffii (strain GS115 / ATCC 20864) (Yeast).